The sequence spans 370 residues: tRNA/tmRNA (uracil-C(5))-methyltransferase (370 aa).

5 residues coordinate S-adenosyl-L-methionine: Gln195, Tyr221, Asn226, Glu242, and Asp302. Catalysis depends on Cys327, which acts as the Nucleophile. The Proton acceptor role is filled by Glu361.

This sequence belongs to the class I-like SAM-binding methyltransferase superfamily. RNA M5U methyltransferase family. TrmA subfamily.

It carries out the reaction uridine(54) in tRNA + S-adenosyl-L-methionine = 5-methyluridine(54) in tRNA + S-adenosyl-L-homocysteine + H(+). It catalyses the reaction uridine(341) in tmRNA + S-adenosyl-L-methionine = 5-methyluridine(341) in tmRNA + S-adenosyl-L-homocysteine + H(+). Dual-specificity methyltransferase that catalyzes the formation of 5-methyluridine at position 54 (m5U54) in all tRNAs, and that of position 341 (m5U341) in tmRNA (transfer-mRNA). This is tRNA/tmRNA (uracil-C(5))-methyltransferase from Wolinella succinogenes (strain ATCC 29543 / DSM 1740 / CCUG 13145 / JCM 31913 / LMG 7466 / NCTC 11488 / FDC 602W) (Vibrio succinogenes).